The sequence spans 226 residues: Gap junction beta-2 protein (226 aa).

Residues 2-13 lie within the membrane without spanning it; sequence DWSALQTILGGV. Over 14–20 the chain is Cytoplasmic; sequence NKHSTSI. Residues 21-40 form a helical membrane-spanning segment; sequence GKIWLTVLFIFRIMILVVAA. Topologically, residues 41 to 73 are extracellular; sequence KEVWGDEQADFVCNTLQPGCKNVCYDHYFPISH. Positions 42, 45, and 47 each coordinate Ca(2+). Intrachain disulfides connect C53/C180, C60/C174, and C64/C169. Residues 74–94 form a helical membrane-spanning segment; the sequence is IRLWALQLIFVSTPALLVAMH. Residues 95-135 are Cytoplasmic-facing; that stretch reads VAYYRHEKKRKFIRGEIKTEFKDIEEIKNQKVRIEGSLWWT. The chain crosses the membrane as a helical span at residues 136–156; it reads YTGSIFFRVIFEAAFMYVFYV. Over 157–189 the chain is Extracellular; it reads MYDGFAMQRLVKCNAWPCPNTVDCFVSRPTEKT. Residues 190–210 traverse the membrane as a helical segment; it reads VFTVFMIAVSGICILLNVTEL. Residues 211 to 226 lie on the Cytoplasmic side of the membrane; it reads CYLLIRFCSGKSKKPV.

The protein belongs to the connexin family. Beta-type (group I) subfamily. As to quaternary structure, a hemichannel or connexon is composed of a hexamer of connexins. A functional gap junction is formed by the apposition of two hemichannels. Forms heteromeric channels with GJB4. Interacts with CNST.

The protein resides in the cell membrane. It localises to the cell junction. The protein localises to the gap junction. Functionally, structural component of gap junctions. Gap junctions are dodecameric channels that connect the cytoplasm of adjoining cells. They are formed by the docking of two hexameric hemichannels, one from each cell membrane. Small molecules and ions diffuse from one cell to a neighboring cell via the central pore. The sequence is that of Gap junction beta-2 protein (GJB2) from Ovis aries (Sheep).